We begin with the raw amino-acid sequence, 625 residues long: Folylpolyglutamate synthase (625 aa).

141–144 (GKGS) contacts ATP. Mg(2+)-binding residues include serine 165, glutamate 234, and histidine 262. Arginine 384 and aspartate 414 together coordinate ATP.

Belongs to the folylpolyglutamate synthase family. A monovalent cation serves as cofactor.

It is found in the mitochondrion inner membrane. The protein resides in the mitochondrion matrix. The catalysed reaction is (6S)-5,6,7,8-tetrahydrofolyl-(gamma-L-Glu)(n) + L-glutamate + ATP = (6S)-5,6,7,8-tetrahydrofolyl-(gamma-L-Glu)(n+1) + ADP + phosphate + H(+). Its pathway is cofactor biosynthesis; tetrahydrofolylpolyglutamate biosynthesis. Its function is as follows. Catalyzes conversion of folates to polyglutamate derivatives allowing concentration of folate compounds in the cell and the intracellular retention of these cofactors, which are important substrates for most of the folate-dependent enzymes that are involved in one-carbon transfer reactions involved in purine, pyrimidine and amino acid synthesis. Essential for organellar and whole-plant folate homeostasis. This chain is Folylpolyglutamate synthase, found in Arabidopsis thaliana (Mouse-ear cress).